The chain runs to 64 residues: Beta-toxin Tf1 (64 aa).

The LCN-type CS-alpha/beta domain maps to 1-62 (KEGYLMDHEG…VWERATNRCG (62 aa)). 4 disulfide bridges follow: Cys-11–Cys-61, Cys-15–Cys-37, Cys-23–Cys-42, and Cys-27–Cys-44. The residue at position 61 (Cys-61) is a Cysteine amide.

Belongs to the long (4 C-C) scorpion toxin superfamily. Sodium channel inhibitor family. Beta subfamily. Expressed by the venom gland.

The protein resides in the secreted. Beta toxins bind voltage-independently at site-4 of sodium channels (Nav) and shift the voltage of activation toward more negative potentials thereby affecting sodium channel activation and promoting spontaneous and repetitive firing. The chain is Beta-toxin Tf1 from Tityus fasciolatus (Central Brazilian scorpion).